Consider the following 234-residue polypeptide: Demethylmenaquinone methyltransferase (234 aa).

Residues T58, D79, and 106 to 107 (NA) contribute to the S-adenosyl-L-methionine site.

This sequence belongs to the class I-like SAM-binding methyltransferase superfamily. MenG/UbiE family.

It carries out the reaction a 2-demethylmenaquinol + S-adenosyl-L-methionine = a menaquinol + S-adenosyl-L-homocysteine + H(+). It functions in the pathway quinol/quinone metabolism; menaquinone biosynthesis; menaquinol from 1,4-dihydroxy-2-naphthoate: step 2/2. Methyltransferase required for the conversion of demethylmenaquinol (DMKH2) to menaquinol (MKH2). This chain is Demethylmenaquinone methyltransferase, found in Bacillus pumilus (strain SAFR-032).